A 416-amino-acid polypeptide reads, in one-letter code: LysM domain-containing GPI-anchored protein 1 (416 aa).

A signal peptide spans 1–27 (MKIPEKPIFLIFVSLILASSLTFTATA). 4 disulfides stabilise this stretch: C34/C100, C40/C163, C98/C161, and C100/C163. N37 carries an N-linked (GlcNAc...) asparagine glycan. One can recognise a LysM 1 domain in the interval 110-157 (THYKTRPSDNLGSIADSVYGGLVSAEQIQEANSVNDPSLLDVGTSLVI). N-linked (GlcNAc...) asparagine glycosylation is present at N165. The LysM 2 domain maps to 176–219 (LSYVVKEIDTLVGIARRYSTTITDLMNVNAMGAPDVSSGDILAV). 2 disulfide bridges follow: C224-C256 and C251-C279. N241 carries N-linked (GlcNAc...) asparagine glycosylation. 3 N-linked (GlcNAc...) asparagine glycosylation sites follow: N288, N299, and N310. Residues 356-376 (DGPGSIASSPRSSMLPGGGIL) are disordered. A391 carries the GPI-anchor amidated alanine lipid modification. A propeptide spans 392-416 (SASSVSYFFITFLISIASFSLALSS) (removed in mature form).

In terms of assembly, interacts with peptidoglycans.

The protein localises to the cell membrane. It localises to the secreted. Functionally, required as a cell surface receptor for peptidoglycan (PGN) elicitor signaling leading to innate immunity. Plays an essential role in detecting PGNs and restricting bacterial growth (of Pseudomonas syringae pv. tomato DC3000 for example). The protein is LysM domain-containing GPI-anchored protein 1 (LYM1) of Arabidopsis thaliana (Mouse-ear cress).